We begin with the raw amino-acid sequence, 168 residues long: Lipoprotein signal peptidase (168 aa).

Helical transmembrane passes span 12–32, 67–87, and 93–113; these read WYWV…WVLA, WQRW…TIWL, and NMVR…GNLI. Residues aspartate 123 and aspartate 141 contribute to the active site. The helical transmembrane segment at 136–156 threads the bilayer; it reads AFNIADAAIFIGAVLIIIDSF.

It belongs to the peptidase A8 family.

It is found in the cell inner membrane. It carries out the reaction Release of signal peptides from bacterial membrane prolipoproteins. Hydrolyzes -Xaa-Yaa-Zaa-|-(S,diacylglyceryl)Cys-, in which Xaa is hydrophobic (preferably Leu), and Yaa (Ala or Ser) and Zaa (Gly or Ala) have small, neutral side chains.. The protein operates within protein modification; lipoprotein biosynthesis (signal peptide cleavage). Its function is as follows. This protein specifically catalyzes the removal of signal peptides from prolipoproteins. In Shewanella amazonensis (strain ATCC BAA-1098 / SB2B), this protein is Lipoprotein signal peptidase.